Consider the following 215-residue polypeptide: Ras-like GTP-binding protein RHO1 (215 aa).

6 residues coordinate GTP: Ala30, Val31, Gly32, Lys33, Thr34, and Cys35. Thr34 lines the Mg(2+) pocket. Short sequence motifs (switch) lie at residues 43–54 (GEIPTAYVPTVF) and 74–93 (DTAGQEEYDRLRPLSYADSD). Thr52 contacts Mg(2+). GTP contacts are provided by Asp135 and Ser166. Residues 194–215 (VTTQAKSQESTQQKKKSKCLLQ) form a disordered region. Low complexity predominate over residues 195 to 204 (TTQAKSQEST). Basic residues predominate over residues 206-215 (QKKKSKCLLQ). Position 212 is a cysteine methyl ester (Cys212). A lipid anchor (S-geranylgeranyl cysteine) is attached at Cys212. Positions 213 to 215 (LLQ) are cleaved as a propeptide — removed in mature form.

This sequence belongs to the small GTPase superfamily. Rho family. In terms of assembly, interacts (GTP-bound form) with formin1 (via GBD/FH3 domain); the interaction activates formin1. Interacts (GTP-bound form) with profilin1. Interacts (GDP-bound form and when prenylated) with RhoGDI. Requires Mg(2+) as cofactor.

Its subcellular location is the cell membrane. The protein localises to the cytoplasm. The protein resides in the cytoskeleton. It localises to the cell projection. It is found in the phagocytic cup. Its subcellular location is the cytoplasmic vesicle. The protein localises to the phagosome. The catalysed reaction is GTP + H2O = GDP + phosphate + H(+). Regulated by guanine nucleotide exchange factors (GEFs) which promote the exchange of bound GDP for free GTP, GTPase activating proteins (GAPs) which increase the GTP hydrolysis activity and GDP dissociation inhibitors which inhibit the dissociation of the nucleotide from the GTPase. Functionally, small GTPase which cycles between active GTP-bound and inactive GDP-bound states. Involved in actin cytoskeleton remodeling. Regulates phagocytosis by modulating actin cytoskeleton dynamics through the recruitment of formin1 and profilin1 to the phagocytosis nucleation site. The protein is Ras-like GTP-binding protein RHO1 of Entamoeba histolytica (strain ATCC 30459 / HM-1:IMSS / ABRM).